The sequence spans 1207 residues: MRGDSFSMSIENLPDSPMGSRKKKMQIRKVFDKMTEWVTPWRSNLESPREMMILRGDVEQDEFQYASSHCLSSYYSVFVVRLAIMVMLAILIGLLTVLTWHFTRIYTKQSLQTLAYGLRYELLQRPVLRMWSVLNTTSELTTAQVKLSEYVIKKYDKPTTQEELVEMYQAMKDVTWALFASAKALNAITINYRNGFVQAFHRDPASSSTFYIFSDLKNYSISGTGPEDVSGWNNKSIHGNMSAIWYQQQLDPVTGENLGKPLKIPPDDLINIAGISQVPDGEASWHVTVSKYMDSPLLSAALPVFDASNKSIVAVVGVTTALYSVGQLMRDLVEVHGGHIYLTSQEGYLLATSTDGPLLKNTSNGPQLMKATDSEEWVIKSGAQWLEKTYGSKRPHVVHAENVKLGDQRYYIDSFYLNLKRLPIVGVVIIPRKFIMGKVDERAFKTLIILISASVCIFFIGCVCILILTNGVSKEMKLRAELIRQLDARRRAEASSNYKSQFLANMSHELRTPMAAVIGLLDILISDDCLSNEQYATVTQIRKCSTALLRLLNNILDLSKVESGKLVLEEAEFDLGRELEGLVDMFSVQCINHNVETVLDLSDDMPALVRGDSARLVQIFANLISNSIKFTTTGHIILRGWCENINSLHDEMSVSVDRRKPWAPMKTKQVQHRNHLQKSCKNANKMVLWFEVDDTGCGIDPSKWDSVFESFEQADPSTTRTHGGTGLGLCIVRNLVNKMGGEIKVVQKNGLGTLMRLYLILSTPDTVDQNIQPDFSKYGLVVMLSMYGSTARMITSKWLRKHGIATVEASDWNELTQIIRDLLETGSRDNSFDSQHNISDPLRAELSNIVEIKNPVFVIVVDIGVLDLTTNIWKEQLNYLDRFSNKAKFAWLLKHDTSNTVKTELRRKGHVMMVNKPLYKAKMIQILEAVIKNRKRGLCNDLRNRGNGSDESHDCLEIDPTQFDTCSSDDSSETSGEKQVDKSVKPSTLHSPVLKNYLIDATTSNDDSTSASMTQKNPEEEDWKDRLYSGIALDGKNQKSLEGIRILLAEDTPVLQRVATIMLEKMGATVTAVWDGQQAVDSLNYKSINAQAPTEEHKSFEEETANKVTTRETSLRNSSPYDLILMDCQMPKMDGYEATKAIRRAEIGTELHIPIVALTAHAMSSDEAKCLEVGMDAYLTKPIDRKLMVSTILSLTKPSAFQTSLSA.

Positions 1–10 are enriched in polar residues; it reads MRGDSFSMSI. The disordered stretch occupies residues 1–20; that stretch reads MRGDSFSMSIENLPDSPMGS. Residues 1-81 are Cytoplasmic-facing; it reads MRGDSFSMSI…SSYYSVFVVR (81 aa). The chain crosses the membrane as a helical span at residues 82-102; the sequence is LAIMVMLAILIGLLTVLTWHF. Topologically, residues 103-446 are extracellular; the sequence is TRIYTKQSLQ…GKVDERAFKT (344 aa). A helical transmembrane segment spans residues 447 to 467; sequence LIILISASVCIFFIGCVCILI. Over 468 to 1207 the chain is Cytoplasmic; the sequence is LTNGVSKEMK…PSAFQTSLSA (740 aa). Residues 505–763 form the Histidine kinase domain; it reads NMSHELRTPM…LMRLYLILST (259 aa). His508 bears the Phosphohistidine; by autocatalysis mark. Disordered stretches follow at residues 964–987 and 1000–1021; these read DTCSSDDSSETSGEKQVDKSVKPS and DATTSNDDSTSASMTQKNPEEE. A compositionally biased stretch (basic and acidic residues) spans 975-984; it reads SGEKQVDKSV. The span at 1000 to 1014 shows a compositional bias: low complexity; that stretch reads DATTSNDDSTSASMT. The 152-residue stretch at 1045-1196 folds into the Response regulatory domain; that stretch reads RILLAEDTPV…LMVSTILSLT (152 aa). A 4-aspartylphosphate modification is found at Asp1127.

As to quaternary structure, interacts with AHP2, depending of the phosphorylation state of Asp-1075 in the receiver domain, but probably not with AHP1 and AHP3. Autophosphorylated predominantly on His residues. Activation probably requires a transfer of a phosphate group between a His in the transmitter domain and an Asp of the receiver domain. As to expression, mostly expressed in roots, and, to a lower extent, in stems, leaves and flowers.

Its subcellular location is the cell membrane. It catalyses the reaction ATP + protein L-histidine = ADP + protein N-phospho-L-histidine.. Functionally, functions as an osmosensor histidine kinase that detects water stress and transmits the stress signal to a downstream MAPK cascade. This protein undergoes an ATP-dependent autophosphorylation at a conserved histidine residue in the kinase core, and a phosphoryl group is then transferred to a conserved aspartate residue in the receiver domain. Positive regulator of drought and salt stress responses, and abscisic acid (ABA) signaling. Confers drought tolerance, probably by regulating levels of ABA accumulation. Plays a redundant role in regulating plant growth and development. Required for the regulation of desiccation processes during seed formation. This Arabidopsis thaliana (Mouse-ear cress) protein is Histidine kinase 1 (AHK1).